A 124-amino-acid chain; its full sequence is UPF0482 protein YpsIP31758_1865 (124 aa).

Positions 1–32 (MMKINNLPRLIRTFLPATLLMLPLVWQTPALA) are cleaved as a signal peptide. Positions 47–68 (GGNNDPMSKEQARQSQQQWDET) are disordered.

Belongs to the UPF0482 family.

This Yersinia pseudotuberculosis serotype O:1b (strain IP 31758) protein is UPF0482 protein YpsIP31758_1865.